The primary structure comprises 293 residues: Small ribosomal subunit protein uS2 (293 aa).

A disordered region spans residues 239–293; it reads PAGGADWEAAPAGFPAAATGEWSEAQPATWESGAAAATGPSTEWADSAPKDTAGW. The segment covering 247–256 has biased composition (low complexity); that stretch reads AAPAGFPAAA.

This sequence belongs to the universal ribosomal protein uS2 family. As to quaternary structure, component of the small ribosomal subunit. Mature ribosomes consist of a small (40S) and a large (60S) subunit. The 40S subunit contains about 33 different proteins and 1 molecule of RNA (18S). The 60S subunit contains about 49 different proteins and 3 molecules of RNA (25S, 5.8S and 5S). Interacts with RPS21.

Its subcellular location is the cytoplasm. Functionally, required for the assembly and/or stability of the 40S ribosomal subunit. Required for the processing of the 20S rRNA-precursor to mature 18S rRNA in a late step of the maturation of 40S ribosomal subunits. This Chaetomium globosum (strain ATCC 6205 / CBS 148.51 / DSM 1962 / NBRC 6347 / NRRL 1970) (Soil fungus) protein is Small ribosomal subunit protein uS2.